The following is a 135-amino-acid chain: Galectin-1 (135 aa).

Position 2 is an N-acetylalanine (A2). A Galectin domain is found at 4 to 135 (GLVASNLNLK…DFKIKCVAFE (132 aa)). K13, K19, and K29 each carry N6-acetyllysine. At S30 the chain carries Phosphoserine. A beta-D-galactoside-binding positions include 45–49 (HFNPR), H53, N62, and 69–72 (WGAE). N6-acetyllysine is present on K128.

As to quaternary structure, homodimer. Binds LGALS3BP. Interacts with CD2, CD3, CD4, CD6, CD7, CD43, ALCAM and CD45. Interacts with laminin (via poly-N-acetyllactosamine). Interacts with SUSD2. Interacts with cargo receptor TMED10; the interaction mediates the translocation from the cytoplasm into the ERGIC (endoplasmic reticulum-Golgi intermediate compartment) and thereby secretion.

The protein localises to the secreted. It localises to the extracellular space. The protein resides in the extracellular matrix. Its subcellular location is the cytoplasm. In terms of biological role, lectin that binds beta-galactoside and a wide array of complex carbohydrates. Plays a role in regulating apoptosis, cell proliferation and cell differentiation. Inhibits CD45 protein phosphatase activity and therefore the dephosphorylation of Lyn kinase. Strong inducer of T-cell apoptosis. The protein is Galectin-1 (LGALS1) of Sus scrofa (Pig).